Consider the following 72-residue polypeptide: Conotoxin Lt6.3 (72 aa).

The N-terminal stretch at 1-22 (MKLTSVVIVAVLFLAACQLTTS) is a signal peptide. A propeptide spanning residues 23 to 46 (DGSRGTWKDRAVRSITKVSMLRWP) is cleaved from the precursor. 3 cysteine pairs are disulfide-bonded: Cys-47–Cys-61, Cys-54–Cys-64, and Cys-60–Cys-71.

Belongs to the conotoxin O1 superfamily. Expressed by the venom duct.

Its subcellular location is the secreted. In Conus litteratus (Lettered cone), this protein is Conotoxin Lt6.3.